Here is a 156-residue protein sequence, read N- to C-terminus: Small ribosomal subunit protein uS7 (156 aa).

The protein belongs to the universal ribosomal protein uS7 family. In terms of assembly, part of the 30S ribosomal subunit. Contacts proteins S9 and S11.

Its function is as follows. One of the primary rRNA binding proteins, it binds directly to 16S rRNA where it nucleates assembly of the head domain of the 30S subunit. Is located at the subunit interface close to the decoding center, probably blocks exit of the E-site tRNA. The sequence is that of Small ribosomal subunit protein uS7 from Staphylococcus carnosus (strain TM300).